Here is a 244-residue protein sequence, read N- to C-terminus: Cell adhesion molecule CEACAM4 (244 aa).

A signal peptide spans 1–35; sequence MGPPSAAPRGGHRPWQGLLITASLLTFWHPPTTVQ. One can recognise an Ig-like V-type domain in the interval 36 to 139; it reads FTIEALPSSA…DSDQATGQLH (104 aa). Residues 36-155 lie on the Extracellular side of the membrane; that stretch reads FTIEALPSSA…PGLPVGAVAG (120 aa). 4 N-linked (GlcNAc...) asparagine glycosylation sites follow: Asn57, Asn104, Asn111, and Asn126. The chain crosses the membrane as a helical span at residues 156–176; sequence IVTGVLVGVALVAALVCFLLL. The Cytoplasmic segment spans residues 177–244; the sequence is SRTGRASIQR…QIDHKADVVS (68 aa). Residues 186-215 form a disordered region; that stretch reads RDLREQPPPASTPGHGPSHRSTFSAPLPSP. The short motif at 222 to 236 is the ITAM element; sequence YEELLYSDANIYCQI.

This sequence belongs to the immunoglobulin superfamily. CEA family. Interacts through its phosphorylated ITAM domain with the SH2 domain-containing cytoplasmic proteins involved in signaling processes during phagocytosis. Post-translationally, N-glycosylated. In terms of processing, the cytoplasmic ITAM-like sequence becomes tyrosine phosphorylated by SRC family PTKs upon ligand-mediated receptor clustering and allows to initiate phagocytosis of bound ligand. As to expression, granulocytes.

The protein resides in the membrane. Its function is as follows. Granulocyte orphan receptor that acts as an trigger efficient phagocytosis of attached particles. The chain is Cell adhesion molecule CEACAM4 from Homo sapiens (Human).